Consider the following 179-residue polypeptide: Bacterioferritin (179 aa).

The region spanning 1–150 is the Ferritin-like diiron domain; sequence MAGNREDRKA…NIGSHIKNLG (150 aa). Positions 23 and 56 each coordinate Fe cation. Residue Met-57 participates in Fe-coproporphyrin III binding. Residues His-59, Glu-99, Glu-132, and His-135 each contribute to the Fe cation site.

It belongs to the bacterioferritin family. In terms of assembly, homooligomer of 24 subunits, arranged as 12 dimers, that are packed together to form an approximately spherical molecule with a central cavity, in which large amounts of iron can be deposited. Fe-coproporphyrin III is required as a cofactor. The cofactor is Fe cation.

It carries out the reaction 4 Fe(2+) + O2 + 4 H(+) = 4 Fe(3+) + 2 H2O. The catalysed reaction is Fe(2+)(in) = Fe(2+)(out). Its function is as follows. Iron-storage protein, whose ferroxidase center binds Fe(2+), oxidizes it using dioxygen to Fe(3+), and participates in the subsequent Fe(3+) oxide mineral core formation within the central cavity of the BFR protein shell. The polypeptide is Bacterioferritin (bfr) (Desulfovibrio desulfuricans (strain ATCC 27774 / DSM 6949 / MB)).